The sequence spans 338 residues: Fructose-1,6-bisphosphatase class 1 (338 aa).

Residues Glu92, Asp115, Leu117, and Asp118 each contribute to the Mg(2+) site. Residues 118-121 (DGSS), Asn211, Tyr244, and Lys274 each bind substrate. Position 280 (Glu280) interacts with Mg(2+).

It belongs to the FBPase class 1 family. In terms of assembly, homotetramer. The cofactor is Mg(2+).

Its subcellular location is the cytoplasm. It catalyses the reaction beta-D-fructose 1,6-bisphosphate + H2O = beta-D-fructose 6-phosphate + phosphate. It participates in carbohydrate biosynthesis; gluconeogenesis. This chain is Fructose-1,6-bisphosphatase class 1, found in Photobacterium profundum (strain SS9).